We begin with the raw amino-acid sequence, 251 residues long: MNKHERLDEIAKLVNKKGTIRTNEIVEGLNVSDMTVRRDLIELENKGILTKIHGGARSNSTFQYKEISHKEKHTRQIAEKRFIAKKAASLIEDGDTLFFGPGTTVELLAEEVNHHTLTIITNCLPVYKILLEKQTAHFRVYLIGGEMRHITEAFVGEMANAMLEKLRFSKMFFSSNAVNKGAVMTSTLDEAYTQQLALSNSIEKYLLIDHTKVGKEDFTSFCQLNELTAVVMDYEDEEKVETIKTYIEVVD.

Residues lysine 3–serine 58 form the HTH deoR-type domain. The H-T-H motif DNA-binding region spans isoleucine 20–aspartate 39.

Repressor of the lactose catabolism operon. Galactose-6-phosphate is the inducer. This Staphylococcus aureus (strain NCTC 8325 / PS 47) protein is Lactose phosphotransferase system repressor (lacR).